Consider the following 701-residue polypeptide: Elongation factor G (701 aa).

Positions 8–290 constitute a tr-type G domain; it reads SRYRNIGISA…AVIEYLPAPT (283 aa). Residues 17 to 24, 88 to 92, and 142 to 145 contribute to the GTP site; these read AHIDAGKT, DTPGH, and NKMD.

This sequence belongs to the TRAFAC class translation factor GTPase superfamily. Classic translation factor GTPase family. EF-G/EF-2 subfamily.

The protein localises to the cytoplasm. In terms of biological role, catalyzes the GTP-dependent ribosomal translocation step during translation elongation. During this step, the ribosome changes from the pre-translocational (PRE) to the post-translocational (POST) state as the newly formed A-site-bound peptidyl-tRNA and P-site-bound deacylated tRNA move to the P and E sites, respectively. Catalyzes the coordinated movement of the two tRNA molecules, the mRNA and conformational changes in the ribosome. This chain is Elongation factor G, found in Actinobacillus pleuropneumoniae serotype 5b (strain L20).